Reading from the N-terminus, the 428-residue chain is MVVSARAGIVVTGTEILTGRVRDRNGPWLADRLLELGVKLAHITICGDCPADIEAQLRFMAEAGVDLIVTSGGLGPTADDMTVEVVARFCNREMVLDVELENKIAAILNSLMTRFNPGDFEAVRAANRKQAMIPAGSQVLDPIGTAPGLVVPGKPTVMVLPGPPSELQPMWRRAVMTAATREAIADRTIYRQQTLRMFGLSESGLAETLRDAQASIPGFDALEITTCLRRGEIEMVTRYEPDVVNVYVELTQLLRDRHGHQLYSEDGARVDDLIAHLLAGRRIATAESCTAGLLAARLTERPGSSDYVAGALVAYSNEAKVTLLGVDPALIAEHGEVSEPVVEAMAAGALQRFDVDTAAAISGIAGPGGGTAEKPIGTVCFTVMLADGGPTLTRTLRLPGNRSDIRERSTTVAMHLLRHALSDTDSVP.

It belongs to the CinA family.

The chain is CinA-like protein from Mycobacterium leprae (strain TN).